The following is a 246-amino-acid chain: Bromelain inhibitor (246 aa).

An N-terminal signal peptide occupies residues 1-19 (MNMLLLFLHEVINGERVTL). Intrachain disulfides connect C22/C42, C25/C74, C27/C40, C49/C56, and C53/C65. A propeptide spanning residues 31–35 (TSSSD) is cleaved from the precursor. 2 propeptides span residues 77–95 (PVSS…RVTL) and 107–111 (TSSSD). 5 cysteine pairs are disulfide-bonded: C98–C118, C101–C150, C103–C116, C125–C132, and C129–C141. Propeptides lie at residues 153-171 (PVSS…RVTL) and 183-187 (TSSSD). Disulfide bonds link C174–C194, C177–C226, C179–C192, C201–C208, and C205–C217. Residues 229–246 (PVSSWEARQKIKLLQGRE) constitute a propeptide that is removed on maturation.

The protein belongs to the protease inhibitor I67 family. Each inhibitor is composed of two chains, designated A and B linked by three disulfide bonds.

Its function is as follows. Weak inhibitor of cysteine proteinases. This chain is Bromelain inhibitor, found in Ananas comosus (Pineapple).